The sequence spans 235 residues: MQPLYEGKAKRLYTTQDQDVLRIVYKDEATAFNGEKKAEFAGKGELNNRLTSHFFEVLAAAGIPTHFIEQTSEREQLVRRVTIIPLEVVVRNVVAGSLSKRLGIEEGTVLETPIVEFYYKDDSLGDPLVTPAHINLLKIATTEELSLLEQEANRVNDVLRPYFDEKGITLIDFKLEYGKTPAGEILLADEISPDTCRLWDKETGEHLDKDVFRRNIGSLIDTYQTLFNRLGGNGQ.

This sequence belongs to the SAICAR synthetase family.

It catalyses the reaction 5-amino-1-(5-phospho-D-ribosyl)imidazole-4-carboxylate + L-aspartate + ATP = (2S)-2-[5-amino-1-(5-phospho-beta-D-ribosyl)imidazole-4-carboxamido]succinate + ADP + phosphate + 2 H(+). The protein operates within purine metabolism; IMP biosynthesis via de novo pathway; 5-amino-1-(5-phospho-D-ribosyl)imidazole-4-carboxamide from 5-amino-1-(5-phospho-D-ribosyl)imidazole-4-carboxylate: step 1/2. This Exiguobacterium sibiricum (strain DSM 17290 / CCUG 55495 / CIP 109462 / JCM 13490 / 255-15) protein is Phosphoribosylaminoimidazole-succinocarboxamide synthase.